We begin with the raw amino-acid sequence, 892 residues long: UPF0182 protein MCA2716 (892 aa).

A run of 7 helical transmembrane segments spans residues 7-27 (LLTS…AIVL), 57-77 (ILSG…FWAA), 107-127 (GALP…ALPF), 163-183 (ILVL…VMVA), 206-226 (IHLN…YVLQ), 252-272 (LPLI…ALWF), and 281-301 (LALT…IDVV).

The protein belongs to the UPF0182 family.

The protein resides in the cell membrane. This Methylococcus capsulatus (strain ATCC 33009 / NCIMB 11132 / Bath) protein is UPF0182 protein MCA2716.